Consider the following 585-residue polypeptide: Complement component C8 alpha chain (585 aa).

Positions 1–20 (MLVAAFFTLFLVTCQPAVTA) are cleaved as a signal peptide. Positions 21–30 (QEKVNQRVNR) are excised as a propeptide. The 54-residue stretch at 38 to 91 (DCQLSSWSEWTDCFPCQDTKYRHRSLLQPNKFGGTICSGDIWDRASCYSPTACL) folds into the TSP type-1 1 domain. Cystine bridges form between C39-C74, C50-C84, C53-C90, C96-C108, C102-C121, C115-C130, and C140-C177. A C-linked (Man) tryptophan glycan is attached at W44. In terms of domain architecture, LDL-receptor class A spans 94–132 (AQCGQDFQCKETGRCLKRHLVCNGENDCLDGSDEDNCED). Ca(2+) contacts are provided by L113, N116, E118, D120, D126, and E127. The 364-residue stretch at 136-499 (TESDCAQYDP…QYLMEFNACR (364 aa)) folds into the MACPF domain. 4 beta stranded membrane-spanning segments follow: residues 248 to 256 (AGVTISAGL), 259 to 266 (SPLLGTVG), 377 to 384 (GGFGEIQY), and 391 to 396 (AQGILS). C375 and C400 are oxidised to a cystine. An N-linked (GlcNAc...) asparagine glycan is attached at N438. Disulfide bonds link C498-C545, C500-C516, C503-C518, and C520-C529. The 32-residue stretch at 499-530 (RCGPCFNNGKPILEGTSCRCQCSLGLQGPACE) folds into the EGF-like domain. The region spanning 540 to 584 (DGHWSCWGSWSPCTAGTRERRRECNNPAPQNGGAPCPGWRVQTQA) is the TSP type-1 2 domain. W543, W546, and W549 each carry a C-linked (Man) tryptophan glycan. 2 disulfides stabilise this stretch: C552/C585 and C563/C575.

The protein belongs to the complement C6/C7/C8/C9 family. In terms of assembly, heterotrimer of 3 chains: alpha (C8A), beta (C8B) and gamma (C8G); the alpha and gamma chains are disulfide bonded. Component of the membrane attack complex (MAC), composed of complement C5b, C6, C7, C8A, C8B, C8G and multiple copies of the pore-forming subunit C9.

It is found in the secreted. It localises to the target cell membrane. With respect to regulation, membrane attack complex (MAC) assembly is inhibited by CD59, thereby protecting self-cells from damage during complement activation. CD59 acts by binding to the beta-haipins of C8 (C8A and C8B), forming an intermolecular beta-sheet that prevents incorporation of the multiple copies of C9 required for complete formation of the osmolytic pore. MAC assembly is also inhibited by clusterin (CLU) chaperones that inhibit polymerization of C9. Its function is as follows. Component of the membrane attack complex (MAC), a multiprotein complex activated by the complement cascade, which inserts into a target cell membrane and forms a pore, leading to target cell membrane rupture and cell lysis. The MAC is initiated by proteolytic cleavage of C5 into complement C5b in response to the classical, alternative, lectin and GZMK complement pathways. The complement pathways consist in a cascade of proteins that leads to phagocytosis and breakdown of pathogens and signaling that strengthens the adaptive immune system. C8A, together with C8B and C8G, inserts into the target membrane, but does not form pores by itself. During MAC assembly, associates with C5b, C6 and C7 to form the C5b8 intermediate complex that inserts into the target membrane and traverses the bilayer increasing membrane rigidity. In Oryctolagus cuniculus (Rabbit), this protein is Complement component C8 alpha chain (C8A).